Consider the following 479-residue polypeptide: MAQHAVYFPDAFLTQMREAMPSTLSFDEFISACQRPLRRSIRINTLKISVADFLALIAPYGWSLTPIPWCHEGFWIERDDEEALPLGSTAEHLSGLFYIQEASSMLPVAALFADDNHPQRVMDMAAAPGSKTTQIAARMGNRGAILANEFSASRVKVLHANISRCGIANTALTHFDGRVFGAALPEMFDAILLDAPCSGEGVVRKDPDALKNWSPESNLDIAATQRELLDSAFHALRPGGTLVYSTCTLNRQENEAVCLWLKETYADAVEFLPLGDLFPDADRALTPEGFLHVFPQIYDCEGFFVARLRKMSSLPAMPAPGYKVGAFPFTPLKGREALHVTQAANAVGLLWDENLHLWQREKEVWLFPAEIESLIGKVRFSRLGIKLAESHNKGYRWQHEATIALACPTHAHAFELSAQEAEEWYRGRDIYPQTPPAADDVLVTFQRQPLGLAKRIGSRIKNSYPRELVRDGKLFTGNS.

Residues 125 to 131, glutamate 149, aspartate 176, and aspartate 194 contribute to the S-adenosyl-L-methionine site; that span reads AAAPGSK. The active-site Nucleophile is the cysteine 247.

The protein belongs to the class I-like SAM-binding methyltransferase superfamily. RsmB/NOP family.

The protein resides in the cytoplasm. The catalysed reaction is cytidine(1407) in 16S rRNA + S-adenosyl-L-methionine = 5-methylcytidine(1407) in 16S rRNA + S-adenosyl-L-homocysteine + H(+). Its function is as follows. Specifically methylates the cytosine at position 1407 (m5C1407) of 16S rRNA. The chain is Ribosomal RNA small subunit methyltransferase F from Salmonella paratyphi B (strain ATCC BAA-1250 / SPB7).